The sequence spans 413 residues: Arginine biosynthesis bifunctional protein ArgJ (413 aa).

Positions 160, 186, 197, 284, 408, and 413 each coordinate substrate. The active-site Nucleophile is the threonine 197.

This sequence belongs to the ArgJ family. Heterotetramer of two alpha and two beta chains.

The protein resides in the cytoplasm. It catalyses the reaction N(2)-acetyl-L-ornithine + L-glutamate = N-acetyl-L-glutamate + L-ornithine. The catalysed reaction is L-glutamate + acetyl-CoA = N-acetyl-L-glutamate + CoA + H(+). The protein operates within amino-acid biosynthesis; L-arginine biosynthesis; L-ornithine and N-acetyl-L-glutamate from L-glutamate and N(2)-acetyl-L-ornithine (cyclic): step 1/1. Its pathway is amino-acid biosynthesis; L-arginine biosynthesis; N(2)-acetyl-L-ornithine from L-glutamate: step 1/4. In terms of biological role, catalyzes two activities which are involved in the cyclic version of arginine biosynthesis: the synthesis of N-acetylglutamate from glutamate and acetyl-CoA as the acetyl donor, and of ornithine by transacetylation between N(2)-acetylornithine and glutamate. The protein is Arginine biosynthesis bifunctional protein ArgJ of Burkholderia pseudomallei (strain 1710b).